Here is a 483-residue protein sequence, read N- to C-terminus: Beta-glucosidase 4 (483 aa).

A beta-D-glucoside contacts are provided by residues Q29, H131, 176–177 (NE), Y310, and E380. E177 functions as the Proton donor in the catalytic mechanism. The active-site Nucleophile is E380. The N-linked (GlcNAc...) asparagine glycan is linked to N398. A beta-D-glucoside is bound by residues W429, 436–437 (EW), and F445.

This sequence belongs to the glycosyl hydrolase 1 family.

The enzyme catalyses Hydrolysis of terminal, non-reducing beta-D-glucosyl residues with release of beta-D-glucose.. In Oryza sativa subsp. japonica (Rice), this protein is Beta-glucosidase 4 (BGLU4).